A 127-amino-acid chain; its full sequence is Large ribosomal subunit protein eL32B (127 aa).

This sequence belongs to the eukaryotic ribosomal protein eL32 family. As to quaternary structure, component of the large ribosomal subunit (LSU). Mature yeast ribosomes consist of a small (40S) and a large (60S) subunit. The 40S small subunit contains 1 molecule of ribosomal RNA (18S rRNA) and at least 33 different proteins. The large 60S subunit contains 3 rRNA molecules (25S, 5.8S and 5S rRNA) and at least 46 different proteins.

It localises to the cytoplasm. It is found in the nucleus. The protein localises to the nucleolus. Functionally, component of the ribosome, a large ribonucleoprotein complex responsible for the synthesis of proteins in the cell. The small ribosomal subunit (SSU) binds messenger RNAs (mRNAs) and translates the encoded message by selecting cognate aminoacyl-transfer RNA (tRNA) molecules. The large subunit (LSU) contains the ribosomal catalytic site termed the peptidyl transferase center (PTC), which catalyzes the formation of peptide bonds, thereby polymerizing the amino acids delivered by tRNAs into a polypeptide chain. The nascent polypeptides leave the ribosome through a tunnel in the LSU and interact with protein factors that function in enzymatic processing, targeting, and the membrane insertion of nascent chains at the exit of the ribosomal tunnel. The chain is Large ribosomal subunit protein eL32B (rpl3201) from Schizosaccharomyces pombe (strain 972 / ATCC 24843) (Fission yeast).